Reading from the N-terminus, the 296-residue chain is Homoserine kinase (296 aa).

An ATP-binding site is contributed by 92-102 (PQSRGLGSSAA).

This sequence belongs to the GHMP kinase family. Homoserine kinase subfamily.

It localises to the cytoplasm. It catalyses the reaction L-homoserine + ATP = O-phospho-L-homoserine + ADP + H(+). The protein operates within amino-acid biosynthesis; L-threonine biosynthesis; L-threonine from L-aspartate: step 4/5. Catalyzes the ATP-dependent phosphorylation of L-homoserine to L-homoserine phosphate. The chain is Homoserine kinase from Cutibacterium acnes (strain DSM 16379 / KPA171202) (Propionibacterium acnes).